Consider the following 391-residue polypeptide: Pyridinium-3,5-bisthiocarboxylic acid mononucleotide nickel insertion protein (391 aa).

It belongs to the LarC family.

The enzyme catalyses Ni(II)-pyridinium-3,5-bisthiocarboxylate mononucleotide = pyridinium-3,5-bisthiocarboxylate mononucleotide + Ni(2+). Its function is as follows. Involved in the biosynthesis of a nickel-pincer cofactor ((SCS)Ni(II) pincer complex). Binds Ni(2+), and functions in nickel delivery to pyridinium-3,5-bisthiocarboxylic acid mononucleotide (P2TMN), to form the mature cofactor. Is thus probably required for the activation of nickel-pincer cofactor-dependent enzymes. This Staphylococcus saprophyticus subsp. saprophyticus (strain ATCC 15305 / DSM 20229 / NCIMB 8711 / NCTC 7292 / S-41) protein is Pyridinium-3,5-bisthiocarboxylic acid mononucleotide nickel insertion protein.